A 496-amino-acid chain; its full sequence is Gasdermin-E (496 aa).

Positions methionine 1–leucine 56 are membrane targeting domain. Cysteine 45 carries the post-translational modification S-(2-succinyl)cysteine. Residue lysine 120 forms a Glycyl lysine isopeptide (Lys-Gly) (interchain with G-Cter in ubiquitin) linkage. S-(2-succinyl)cysteine occurs at positions 156, 168, and 180. A Glycyl lysine isopeptide (Lys-Gly) (interchain with G-Cter in ubiquitin) cross-link involves residue lysine 189. S-(2-succinyl)cysteine occurs at positions 235, 371, 408, 417, and 489.

This sequence belongs to the gasdermin family. As to quaternary structure, homooligomer; homooligomeric ring-shaped pore complex containing 27-28 subunits when inserted in the membrane. In terms of processing, cleavage at Asp-270 by CASP3 (mature and uncleaved precursor forms) or granzyme B (GZMB) relieves autoinhibition and is sufficient to initiate pyroptosis. Succination by the Krebs cycle intermediate fumarate, which leads to S-(2-succinyl)cysteine residues, inhibits processing by caspases, and ability to initiate pyroptosis. Succination modification is catalyzed by a non-enzymatic reaction caused by an accumulation of fumarate. Post-translationally, ubiquitinated at Lys-120 and Lys-189 via 'Lys-48'-linked polyubiquitin chains, leading to proteasomal degradation. Deubiquitinated by USP48, leading to increased stability. In terms of processing, palmitoylated. In terms of tissue distribution, expressed in cochlea. Low level of expression in heart, brain, placenta, lung, liver, skeletal muscle, kidney and pancreas, with highest expression in placenta.

It localises to the cell membrane. Its subcellular location is the cytoplasm. The protein localises to the cytosol. With respect to regulation, the full-length protein before cleavage is inactive: intramolecular interactions between N- and C-terminal domains mediate autoinhibition in the absence of activation signal. The intrinsic pyroptosis-inducing activity is carried by the released N-terminal moiety (Gasdermin-E, N-terminal) following cleavage by CASP3 or granzyme B (GZMB). Activated by NLRP1 in the absence of GSDMD expression: NLRP1 cleaves and activates CASP8, promoting downstream activation of CASP3 and subsequent activation of GSDME. Its activity is regulated as follows. (Microbial infection) Activated upon human coronavirus SARS-CoV-2 infection, leading to lung epithelial cell death. Activation takes place in response to (1) activation of NLRP1 and (2) inactivation of GSDMD following NLRP1 and GSDMD cleavage by the SARS-CoV-2 3C-like proteinase nsp5. Functionally, precursor of a pore-forming protein that converts non-inflammatory apoptosis to pyroptosis. This form constitutes the precursor of the pore-forming protein: upon cleavage, the released N-terminal moiety (Gasdermin-E, N-terminal) binds to membranes and forms pores, triggering pyroptosis. Its function is as follows. Pore-forming protein produced by cleavage by CASP3 or granzyme B (GZMB), which converts non-inflammatory apoptosis to pyroptosis or promotes granzyme-mediated pyroptosis, respectively. After cleavage, moves to the plasma membrane, homooligomerizes within the membrane and forms pores of 10-15 nanometers (nm) of inner diameter, allowing the release of mature interleukins (IL1B and IL16) and triggering pyroptosis. Binds to inner leaflet lipids, bisphosphorylated phosphatidylinositols, such as phosphatidylinositol (4,5)-bisphosphate. Cleavage by CASP3 switches CASP3-mediated apoptosis induced by TNF or danger signals, such as chemotherapy drugs, to pyroptosis. Mediates secondary necrosis downstream of the mitochondrial apoptotic pathway and CASP3 activation as well as in response to viral agents. Exhibits bactericidal activity. Cleavage by GZMB promotes tumor suppressor activity by triggering robust anti-tumor immunity. Suppresses tumors by mediating granzyme-mediated pyroptosis in target cells of natural killer (NK) cells: cleavage by granzyme B (GZMB), delivered to target cells from NK-cells, triggers pyroptosis of tumor cells and tumor suppression. May play a role in the p53/TP53-regulated cellular response to DNA damage. In terms of biological role, (Microbial infection) Pore-forming protein, which promotes maternal placental pyroptosis in response to Zika virus infection, contributing to adverse fetal outcomes. The sequence is that of Gasdermin-E from Homo sapiens (Human).